The sequence spans 184 residues: PXMP2/4 family protein 3 (184 aa).

Positions 1–44 (MSNSKPLSLTDAVTTWYMKKLKSKPIQTKALTSATLSFISSVVA) are cleaved as a signal peptide. A run of 3 helical transmembrane segments spans residues 58 to 78 (VVKF…WHII), 97 to 117 (IVDQ…VLAI), and 159 to 179 (LRVL…SILA).

Belongs to the peroxisomal membrane protein PXMP2/4 family.

The protein resides in the membrane. This is PXMP2/4 family protein 3 from Dictyostelium discoideum (Social amoeba).